A 711-amino-acid chain; its full sequence is Hydroperoxide isomerase ALOXE3 (711 aa).

Residues 2 to 119 (AVYRLCVTTG…TVELRPGTAR (118 aa)) form the PLAT domain. One can recognise a Lipoxygenase domain in the interval 120–711 (TICQDSLPLL…PPLIENSVSI (592 aa)). The Fe cation site is built by H408, H413, H588, N592, and I711.

The protein belongs to the lipoxygenase family. Fe cation is required as a cofactor. In terms of tissue distribution, predominantly expressed in skin.

It is found in the cytoplasm. The enzyme catalyses a hydroperoxyeicosatetraenoate = a hydroxy-epoxy-eicosatetraenoate. The catalysed reaction is (12R)-hydroperoxy-(5Z,8Z,10E,14Z)-eicosatetraenoate = (8R)-hydroxy-(11R,12R)-epoxy-(5Z,9E,14Z)-eicosatrienoate. It catalyses the reaction (12S)-hydroperoxy-(5Z,8Z,10E,14Z)-eicosatetraenoate = (8R)-hydroxy-(11S,12S)-epoxy-(5Z,9E,14Z)-eicosatrienoate. It carries out the reaction (12S)-hydroperoxy-(5Z,8Z,10E,14Z)-eicosatetraenoate = (10R)-hydroxy-(11S,12S)-epoxy-(5Z,8Z,14Z)-eicosatrienoate. The enzyme catalyses (15S)-hydroperoxy-(5Z,8Z,11Z,13E)-eicosatetraenoate = (13R)-hydroxy-(14S,15S)-epoxy-(5Z,8Z,11Z)-eicosatrienoate. The catalysed reaction is (5S)-hydroperoxy-(6E,8Z,11Z,14Z)-eicosatetraenoate = 7R-hydroxy-5S,6S-epoxy-(8Z,11Z,14Z)-eicosatrienoate. It catalyses the reaction (13S)-hydroperoxy-(9Z,11E)-octadecadienoate = 11-hydroxy-(12S,13S)-epoxy-(9Z)-octadecenoate. It carries out the reaction N-[omega-(9R)-hydroperoxy-(10E,12Z)-octadecadienoyloxy]acyl-beta-D-glucosyl-(1&lt;-&gt;1)-octadecasphing-4E-enine = a N-[omega-(9R,10R)-epoxy-(13R)-hydroxy-(11E)-octadecenoyloxy]acyl-beta-D-glucosyl-(1&lt;-&gt;1)-sphing-4E-enine. The enzyme catalyses a N-[omega-(9R)-hydroperoxy-(10E,12Z)-octadecadienoyloxy]-acylsphin-4E-enine = a N-[omega-(9R,10R)-epoxy-(13R)-hydroxy-(11E)-octadecenoyloxy]-acylsphing-4E-enine. The catalysed reaction is a hydroperoxyeicosatetraenoate = an oxoeicosatetraenoate + H2O. It catalyses the reaction (12R)-hydroperoxy-(5Z,8Z,10E,14Z)-eicosatetraenoate = 12-oxo-(5Z,8Z,10E,14Z)-eicosatetraenoate + H2O. It carries out the reaction (12S)-hydroperoxy-(5Z,8Z,10E,14Z)-eicosatetraenoate = 12-oxo-(5Z,8Z,10E,14Z)-eicosatetraenoate + H2O. The enzyme catalyses (15S)-hydroperoxy-(5Z,8Z,11Z,13E)-eicosatetraenoate = 15-oxo-(5Z,8Z,11Z,13E)-eicosatetraenoate + H2O. The catalysed reaction is (13S)-hydroperoxy-(9Z,11E)-octadecadienoate = 13-oxo-(9Z,11E)-octadecadienoate + H2O. It catalyses the reaction (8S)-hydroperoxy-(5Z,9E,11Z,14Z)-eicosatetraenoate = (10R)-hydroxy-(8S,9S)-epoxy-(5Z,11Z,14Z)-eicosatrienoate. It carries out the reaction (8R)-hydroperoxy-(5Z,9E,11Z,14Z)-eicosatetraenoate = 8-oxo-(5Z,9E,11Z,14Z)-eicosatetraenoate + H2O. The enzyme catalyses (8S)-hydroperoxy-(5Z,9E,11Z,14Z)-eicosatetraenoate = 8-oxo-(5Z,9E,11Z,14Z)-eicosatetraenoate + H2O. The protein operates within lipid metabolism; hydroperoxy eicosatetraenoic acid biosynthesis. It functions in the pathway lipid metabolism; sphingolipid metabolism. Lipoxygenase activity is activated by 13(S)-HPODE leading to an active free ferric enzyme. The lipoxygenase and hydroperoxide isomerase activities are in competition and are reciprocally regulated by oxygen. The oxygen reacts with an epoxyallylic radical intermediate leading to an epoxyallylic peroxyl radical, which, due to its limited reactivity within the enzyme active site, it dissociates and leaves the enzyme in the activated free ferric state. Its function is as follows. Non-heme iron-containing lipoxygenase which is atypical in that it displays a prominent hydroperoxide isomerase activity and a reduced lipoxygenases activity. The hydroperoxide isomerase activity catalyzes the isomerization of hydroperoxides, derived from arachidonic and linoleic acid by ALOX12B, into hepoxilin-type epoxyalcohols and ketones. In presence of oxygen, oxygenates polyunsaturated fatty acids, including arachidonic acid, to produce fatty acid hydroperoxides. In the skin, acts downstream of ALOX12B on the linoleate moiety of esterified omega-hydroxyacyl-sphingosine (EOS) ceramides to produce an epoxy-ketone derivative, a crucial step in the conjugation of omega-hydroxyceramide to membrane proteins. Therefore plays a crucial role in the synthesis of corneocytes lipid envelope and the establishment of the skin barrier to water loss. In parallel, it may have a signaling function in barrier formation through the production of hepoxilins metabolites. Also plays a role in adipocyte differentiation through hepoxilin A3 and hepoxilin B3 production which in turn activate PPARG. Through the production of hepoxilins in the spinal cord, it may regulate inflammatory tactile allodynia. The chain is Hydroperoxide isomerase ALOXE3 from Homo sapiens (Human).